The following is a 27-amino-acid chain: QKLCERPSGTXSGVCGNNNACKNQCIR.

Gln1 is modified (pyrrolidone carboxylic acid).

It belongs to the DEFL family. As to quaternary structure, forms oligomers in its native state.

In terms of biological role, possesses some antifungal activity sensitive to inorganic cations and antibacterial activity against B.megaterium. The sequence is that of Defensin-like protein 2 from Brassica campestris (Field mustard).